A 378-amino-acid polypeptide reads, in one-letter code: Spermidine/putrescine import ATP-binding protein PotA (378 aa).

Positions 18–248 (VLLSGISKSF…PKNLFVAGFI (231 aa)) constitute an ABC transporter domain. ATP is bound at residue 50-57 (GPSGCGKT).

This sequence belongs to the ABC transporter superfamily. Spermidine/putrescine importer (TC 3.A.1.11.1) family. As to quaternary structure, the complex is composed of two ATP-binding proteins (PotA), two transmembrane proteins (PotB and PotC) and a solute-binding protein (PotD).

The protein localises to the cell inner membrane. The enzyme catalyses ATP + H2O + polyamine-[polyamine-binding protein]Side 1 = ADP + phosphate + polyamineSide 2 + [polyamine-binding protein]Side 1.. In terms of biological role, part of the ABC transporter complex PotABCD involved in spermidine/putrescine import. Responsible for energy coupling to the transport system. This Salmonella paratyphi A (strain ATCC 9150 / SARB42) protein is Spermidine/putrescine import ATP-binding protein PotA.